A 259-amino-acid polypeptide reads, in one-letter code: Polycomb group RING finger protein 1 (259 aa).

The segment at 45 to 84 (CYLCAGYFIDATTITECLHTFCKSCIVKYLQTSKYCPLCN) adopts an RING-type zinc-finger fold.

Component of a PRC1-like complex.

The protein resides in the nucleus. Component of a Polycomb group (PcG) multiprotein PRC1-like complex, a complex class required to maintain the transcriptionally repressive state of many genes, including Hox genes, throughout development. PcG PRC1 complex acts via chromatin remodeling and modification of histones; it mediates monoubiquitination of histone H2A 'Lys-119', rendering chromatin heritably changed in its expressibility. The chain is Polycomb group RING finger protein 1 (pcgf1) from Xenopus tropicalis (Western clawed frog).